Reading from the N-terminus, the 77-residue chain is Conotoxin LiC42 (77 aa).

The first 22 residues, Met1–Ala22, serve as a signal peptide directing secretion. Residues Asp23 to Arg47 constitute a propeptide that is removed on maturation. 3 disulfides stabilise this stretch: Cys49–Cys62, Cys56–Cys67, and Cys61–Cys76.

This sequence belongs to the conotoxin O1 superfamily. In terms of tissue distribution, expressed by the venom duct.

It localises to the secreted. This chain is Conotoxin LiC42, found in Conus lividus (Livid cone).